Here is a 781-residue protein sequence, read N- to C-terminus: Molybdenum cofactor sulfurase (781 aa).

At Lys-246 the chain carries N6-(pyridoxal phosphate)lysine. Cys-413 is a catalytic residue. An MOSC domain is found at 619-781 (GDAVAQWLSE…MTCGDVVIVE (163 aa)). Ser-734 carries the post-translational modification Phosphoserine.

It belongs to the class-V pyridoxal-phosphate-dependent aminotransferase family. MOCOS subfamily. Pyridoxal 5'-phosphate is required as a cofactor.

It catalyses the reaction Mo-molybdopterin + L-cysteine + AH2 = thio-Mo-molybdopterin + L-alanine + A + H2O. It participates in cofactor biosynthesis; molybdopterin biosynthesis. Functionally, sulfurates the molybdenum cofactor. Sulfation of molybdenum is essential for xanthine dehydrogenase (XDH) and aldehyde oxidase (ADO) enzymes in which molybdenum cofactor is liganded by 1 oxygen and 1 sulfur atom in active form. This Drosophila erecta (Fruit fly) protein is Molybdenum cofactor sulfurase.